Here is a 346-residue protein sequence, read N- to C-terminus: Heterogeneous nuclear ribonucleoprotein A1 (346 aa).

2 RRM domains span residues 23-123 (RKIF…GVRE) and 114-191 (KRLY…KGLS). Basic and acidic residues-rich tracts occupy residues 92–107 (TVDP…KNRS) and 189–215 (GLSK…RDGQ). 2 disordered regions span residues 92–111 (TVDP…ESNV) and 189–346 (GLSK…NRNY). Gly residues-rich tracts occupy residues 216–296 (RGGY…GWGG) and 303–331 (GGWG…GGQS). Low complexity predominate over residues 332-346 (GAQQWAHAQGGNRNY).

Its subcellular location is the nucleus. It is found in the chromosome. The protein localises to the telomere. This protein is a component of ribonucleosomes. Overexpression gradually increases telomere length, leading to increase lifespan. The sequence is that of Heterogeneous nuclear ribonucleoprotein A1 from Caenorhabditis elegans.